The chain runs to 471 residues: Paraneoplastic antigen-like protein 8A (471 aa).

Disordered regions lie at residues 188–300 (SAAG…EGSA) and 321–471 (ASRG…PSAV). Positions 238–247 (HSRRKRQKKT) are enriched in basic residues. Residues 256–269 (KKSQGSHSHSSASL) show a composition bias toward low complexity. Positions 270–287 (KHPEADDGKNRERLEHVR) are enriched in basic and acidic residues.

The protein belongs to the PNMA family.

This Bos taurus (Bovine) protein is Paraneoplastic antigen-like protein 8A (PNMA8A).